A 391-amino-acid polypeptide reads, in one-letter code: MKFTLISSCVTLALMTLSIEAAPSGKKVNIPLTKNKDYKPNAKNAIQKAIAKYHRHRSVSSSNSTSTDGIGYVPVTDYYNDIEYYGEVTVGTPGVTLKLDFDTGSSDLWFASSLCTNCGSSQTKYNPNESSTYARDGRTWSISYGDGSSASGILGTDTVILGGLTIRHQTIELARREASQFQSGPSDGLLGLGFDSITTVRGVKTPVDNLISQGLISNPVFGVYLGKESNGGGGEYIFGGYDSSKFKGSLTTIPVDNSNGWYGITVRGTSIGGSRVSSSFDAILDTGTSLLVLPNDVASSVAEAYGASDNYDGTFSISCDTSSFEPLVFTIGSSTFEVPADSLVYEQDGYSCIAGFGYGDYDFAIFGDVFLKNNYVVFNPEVPHVQIAPIA.

The N-terminal stretch at 1–21 (MKFTLISSCVTLALMTLSIEA) is a signal peptide. Residues 22-68 (APSGKKVNIPLTKNKDYKPNAKNAIQKAIAKYHRHRSVSSSNSTSTD) constitute a propeptide, activation peptide. Residues 84–388 (YYGEVTVGTP…NPEVPHVQIA (305 aa)) form the Peptidase A1 domain. Aspartate 102 is a catalytic residue. A disulfide bond links cysteine 115 and cysteine 118. The active site involves aspartate 285. A disulfide bond links cysteine 319 and cysteine 352.

The protein belongs to the peptidase A1 family.

It catalyses the reaction Hydrolysis of proteins with broad specificity similar to that of pepsin A, preferring hydrophobic residues at P1 and P1'. Clots milk and activates trypsinogen. Does not cleave 4-Gln-|-His-5, but does cleave 10-His-|-Leu-11 and 12-Val-|-Glu-13 in B chain of insulin.. This chain is Rhizopuspepsin-3, found in Rhizopus niveus.